We begin with the raw amino-acid sequence, 671 residues long: cGMP-dependent protein kinase 1 (671 aa).

An N-acetylserine modification is found at Ser-2. The stretch at 2-59 (SELEEDFAKILMLKEERIKELEKRLSEKEEEIQELKRKLHKCQSVLPVPSTHIGPRTT) forms a coiled coil. The tract at residues 2-102 (SELEEDFAKI…LIKEAILDND (101 aa)) is required for dimerization. The tract at residues 9 to 44 (AKILMLKEERIKELEKRLSEKEEEIQELKRKLHKCQ) is leucine-zipper. An autoinhibitory domain region spans residues 50 to 75 (PSTHIGPRTTRAQGISAEPQTYRSFH). Phosphothreonine; by autocatalysis is present on Thr-59. The cGMP-binding, high affinity stretch occupies residues 103-220 (FMKNLELSQI…EYMEFLKSVP (118 aa)). 3',5'-cyclic GMP contacts are provided by residues 167-170 (GELA), 177-178 (RT), Arg-282, 291-294 (GEKA), 301-302 (RT), and Tyr-336. The segment at 221–341 (TFQSLPEEIL…SNKAYEDAEA (121 aa)) is cGMP-binding, low affinity. Positions 360–619 (FNIIDTLGVG…VKDIQKHKWF (260 aa)) constitute a Protein kinase domain. ATP-binding positions include 366 to 374 (LGVGGFGRV) and Lys-390. Asp-484 functions as the Proton acceptor in the catalytic mechanism. At Thr-515 the chain carries Phosphothreonine. In terms of domain architecture, AGC-kinase C-terminal spans 620-671 (EGFNWEGLRKGTLTPPIIPSVASPTDTSNFDGFPEDNDEPPPDDNSGWDIDF). The tract at residues 635–671 (PIIPSVASPTDTSNFDGFPEDNDEPPPDDNSGWDIDF) is disordered. A compositionally biased stretch (acidic residues) spans 652–661 (FPEDNDEPPP).

This sequence belongs to the protein kinase superfamily. AGC Ser/Thr protein kinase family. cGMP subfamily. Isoform alpha: parallel homodimer or heterodimer and also heterotetramer. Interacts directly with PPP1R12A. Non-covalent dimer of dimer of PRKG1-PRKG1 and PPP1R12A-PPP1R12A. This interaction targets PRKG1 to stress fibers to mediate smooth muscle cell relaxation and vasodilation in responses to rises in cGMP. Isoform beta: antiparallel homodimer. Part of cGMP kinase signaling complex at least composed of ACTA2/alpha-actin, CNN1/calponin H1, PLN/phospholamban, PRKG1 and ITPR1. Interacts with IRAG1. Forms a stable complex with ITPR1, IRAG1, and isoform beta of PRKG1. Interacts with TRPC7 (via ankyrin repeat domain). Isoform alpha interacts with RGS2. Interacts with GTF2I. Post-translationally, autophosphorylation increases kinase activity. In terms of processing, 65 kDa monomer is produced by proteolytic cleavage.

It is found in the cytoplasm. The enzyme catalyses L-seryl-[protein] + ATP = O-phospho-L-seryl-[protein] + ADP + H(+). It catalyses the reaction L-threonyl-[protein] + ATP = O-phospho-L-threonyl-[protein] + ADP + H(+). Its activity is regulated as follows. In the absence of cGMP, PRKG1 activity is suppressed by autoinhibitory contacts. In terms of biological role, serine/threonine protein kinase that acts as a key mediator of the nitric oxide (NO)/cGMP signaling pathway. GMP binding activates PRKG1, which phosphorylates serines and threonines on many cellular proteins. Numerous protein targets for PRKG1 phosphorylation are implicated in modulating cellular calcium, but the contribution of each of these targets may vary substantially among cell types. Proteins that are phosphorylated by PRKG1 regulate platelet activation and adhesion, smooth muscle contraction, cardiac function, gene expression, feedback of the NO-signaling pathway, and other processes involved in several aspects of the CNS like axon guidance, hippocampal and cerebellar learning, circadian rhythm and nociception. Smooth muscle relaxation is mediated through lowering of intracellular free calcium, by desensitization of contractile proteins to calcium, and by decrease in the contractile state of smooth muscle or in platelet activation. Regulates intracellular calcium levels via several pathways: phosphorylates IRAG1 and inhibits IP3-induced Ca(2+) release from intracellular stores, phosphorylation of KCNMA1 (BKCa) channels decreases intracellular Ca(2+) levels, which leads to increased opening of this channel. PRKG1 phosphorylates the canonical transient receptor potential channel (TRPC) family which inactivates the associated inward calcium current. Another mode of action of NO/cGMP/PKGI signaling involves PKGI-mediated inactivation of the Ras homolog gene family member A (RhoA). Phosphorylation of RHOA by PRKG1 blocks the action of this protein in myriad processes: regulation of RHOA translocation; decreasing contraction; controlling vesicle trafficking, reduction of myosin light chain phosphorylation resulting in vasorelaxation. Activation of PRKG1 by NO signaling also alters gene expression in a number of tissues. In smooth muscle cells, increased cGMP and PRKG1 activity influence expression of smooth muscle-specific contractile proteins, levels of proteins in the NO/cGMP signaling pathway, down-regulation of the matrix proteins osteopontin and thrombospondin-1 to limit smooth muscle cell migration and phenotype. Regulates vasodilator-stimulated phosphoprotein (VASP) functions in platelets and smooth muscle. The protein is cGMP-dependent protein kinase 1 (PRKG1) of Oryctolagus cuniculus (Rabbit).